Consider the following 734-residue polypeptide: Photosystem I P700 chlorophyll a apoprotein A2 (734 aa).

Helical transmembrane passes span 46–69 (IFAS…FHVA), 135–158 (LYTG…LHLQ), 175–199 (LNHH…HVAI), 273–291 (IAHH…GHMY), 330–353 (LHFQ…QHIY), 369–395 (AALY…IFFI), 417–439 (AIIS…LYVH), and 517–535 (FLVH…LILV). Residues Cys-559 and Cys-568 each contribute to the [4Fe-4S] cluster site. Transmembrane regions (helical) follow at residues 575-596 (AFYL…YWHW) and 643-665 (LSVW…MFLI). Residues His-654, Met-662, and Tyr-670 each coordinate chlorophyll a. Trp-671 provides a ligand contact to phylloquinone. The helical transmembrane segment at 707-727 (LVGLAHFSVGYIFTYAAFLIA) threads the bilayer.

This sequence belongs to the PsaA/PsaB family. In terms of assembly, the PsaA/B heterodimer binds the P700 chlorophyll special pair and subsequent electron acceptors. PSI consists of a core antenna complex that captures photons, and an electron transfer chain that converts photonic excitation into a charge separation. The eukaryotic PSI reaction center is composed of at least 11 subunits. It depends on P700 is a chlorophyll a/chlorophyll a' dimer, A0 is one or more chlorophyll a, A1 is one or both phylloquinones and FX is a shared 4Fe-4S iron-sulfur center. as a cofactor.

Its subcellular location is the plastid. The protein resides in the chloroplast thylakoid membrane. The catalysed reaction is reduced [plastocyanin] + hnu + oxidized [2Fe-2S]-[ferredoxin] = oxidized [plastocyanin] + reduced [2Fe-2S]-[ferredoxin]. Functionally, psaA and PsaB bind P700, the primary electron donor of photosystem I (PSI), as well as the electron acceptors A0, A1 and FX. PSI is a plastocyanin-ferredoxin oxidoreductase, converting photonic excitation into a charge separation, which transfers an electron from the donor P700 chlorophyll pair to the spectroscopically characterized acceptors A0, A1, FX, FA and FB in turn. Oxidized P700 is reduced on the lumenal side of the thylakoid membrane by plastocyanin. The polypeptide is Photosystem I P700 chlorophyll a apoprotein A2 (Staurastrum punctulatum (Green alga)).